Reading from the N-terminus, the 214-residue chain is Ras-related protein RABH1c (214 aa).

Position 16–23 (16–23 (GDQSVGKT)) interacts with GTP. The Effector region motif lies at 38-46 (YQPTIGIDF). Residues 64–68 (DTAGQ), 123–126 (NKTD), and 153–154 (SA) contribute to the GTP site. The segment at 194–214 (TSNSSQGEQQGGAGGGGGCSC) is disordered. The span at 202–214 (QQGGAGGGGGCSC) shows a compositional bias: gly residues. Residues Cys-212 and Cys-214 are each lipidated (S-geranylgeranyl cysteine). Position 214 is a cysteine methyl ester (Cys-214).

It belongs to the small GTPase superfamily. Rab family. In terms of assembly, interacts with the C-terminus of GC5, but not with GC3.

Its subcellular location is the golgi apparatus membrane. It is found in the cytoplasm. The protein resides in the cytosol. Functionally, protein transport. Regulator of membrane traffic from the Golgi apparatus towards the endoplasmic reticulum (ER). This Arabidopsis thaliana (Mouse-ear cress) protein is Ras-related protein RABH1c (RABH1C).